A 231-amino-acid polypeptide reads, in one-letter code: Ribose-5-phosphate isomerase A (231 aa).

Substrate-binding positions include 40–43, 93–96, and 106–109; these read TGST, DGAD, and KGGG. Catalysis depends on E115, which acts as the Proton acceptor. K133 serves as a coordination point for substrate.

It belongs to the ribose 5-phosphate isomerase family. In terms of assembly, homodimer.

It carries out the reaction aldehydo-D-ribose 5-phosphate = D-ribulose 5-phosphate. It functions in the pathway carbohydrate degradation; pentose phosphate pathway; D-ribose 5-phosphate from D-ribulose 5-phosphate (non-oxidative stage): step 1/1. Functionally, catalyzes the reversible conversion of ribose-5-phosphate to ribulose 5-phosphate. The polypeptide is Ribose-5-phosphate isomerase A (Escherichia coli O6:K15:H31 (strain 536 / UPEC)).